The primary structure comprises 266 residues: Undecaprenyl-diphosphatase (266 aa).

Transmembrane regions (helical) follow at residues 1-21 (MDFL…FIPV), 39-59 (PGSS…FWYF), 86-106 (SIFI…LFVT), 117-137 (FSIA…DIST), 153-173 (FIGI…GATI), 190-210 (SFLL…ITSI), 216-236 (FPFL…LLAI), and 246-266 (NGLK…ILNL).

This sequence belongs to the UppP family.

It is found in the cell inner membrane. It carries out the reaction di-trans,octa-cis-undecaprenyl diphosphate + H2O = di-trans,octa-cis-undecaprenyl phosphate + phosphate + H(+). Catalyzes the dephosphorylation of undecaprenyl diphosphate (UPP). Confers resistance to bacitracin. In Prochlorococcus marinus (strain MIT 9515), this protein is Undecaprenyl-diphosphatase.